A 138-amino-acid chain; its full sequence is Large ribosomal subunit protein uL16 (138 aa).

The protein belongs to the universal ribosomal protein uL16 family. As to quaternary structure, part of the 50S ribosomal subunit.

Binds 23S rRNA and is also seen to make contacts with the A and possibly P site tRNAs. This Acholeplasma laidlawii (strain PG-8A) protein is Large ribosomal subunit protein uL16.